Consider the following 278-residue polypeptide: Non-heme chloroperoxidase (278 aa).

Residues 24–259 (PIVFHHGWPL…LKTYPGYSHG (236 aa)) enclose the AB hydrolase-1 domain. Residues serine 97, aspartate 229, and histidine 258 contribute to the active site.

Belongs to the AB hydrolase superfamily. Bacterial non-heme haloperoxidase / perhydrolase family. As to quaternary structure, homodimer.

In terms of biological role, chlorinates and brominates suitable organic compounds. Involved in the biosynthesis of the antibiotic pyrrolnitrin. In Burkholderia pyrrocinia (Pseudomonas pyrrocinia), this protein is Non-heme chloroperoxidase (cpo).